Consider the following 360-residue polypeptide: Protein-glutamate methylesterase/protein-glutamine glutaminase 3 (360 aa).

Residues 14–131 (RVLVIDDSAT…AEGVQAYAEE (118 aa)) enclose the Response regulatory domain. Asp65 carries the post-translational modification 4-aspartylphosphate. In terms of domain architecture, CheB-type methylesterase spans 169–360 (AGKDGRVVAV…AGKLMELDGA (192 aa)). Catalysis depends on residues Ser181, His207, and Asp303.

Belongs to the CheB family. Post-translationally, phosphorylated by CheA. Phosphorylation of the N-terminal regulatory domain activates the methylesterase activity.

It is found in the cytoplasm. The catalysed reaction is [protein]-L-glutamate 5-O-methyl ester + H2O = L-glutamyl-[protein] + methanol + H(+). It catalyses the reaction L-glutaminyl-[protein] + H2O = L-glutamyl-[protein] + NH4(+). Functionally, involved in chemotaxis. Part of a chemotaxis signal transduction system that modulates chemotaxis in response to various stimuli. Catalyzes the demethylation of specific methylglutamate residues introduced into the chemoreceptors (methyl-accepting chemotaxis proteins or MCP) by CheR. Also mediates the irreversible deamidation of specific glutamine residues to glutamic acid. The chain is Protein-glutamate methylesterase/protein-glutamine glutaminase 3 from Burkholderia thailandensis (strain ATCC 700388 / DSM 13276 / CCUG 48851 / CIP 106301 / E264).